The following is a 153-amino-acid chain: Large ribosomal subunit protein uL22 (153 aa).

The tract at residues 110 to 153 is disordered; that stretch reads ITVIVESRPPKQKGASAASARSRRAQGSKAAATKKSAETKEGSE. Residues 144–153 are compositionally biased toward basic and acidic residues; sequence KSAETKEGSE.

It belongs to the universal ribosomal protein uL22 family. As to quaternary structure, part of the 50S ribosomal subunit.

This protein binds specifically to 23S rRNA; its binding is stimulated by other ribosomal proteins, e.g. L4, L17, and L20. It is important during the early stages of 50S assembly. It makes multiple contacts with different domains of the 23S rRNA in the assembled 50S subunit and ribosome. Its function is as follows. The globular domain of the protein is located near the polypeptide exit tunnel on the outside of the subunit, while an extended beta-hairpin is found that lines the wall of the exit tunnel in the center of the 70S ribosome. This chain is Large ribosomal subunit protein uL22, found in Mycolicibacterium smegmatis (strain ATCC 700084 / mc(2)155) (Mycobacterium smegmatis).